A 208-amino-acid polypeptide reads, in one-letter code: Probable GTP-binding protein EngB (208 aa).

The EngB-type G domain maps to 29–203; it reads EGREVAFAGR…WDKLGEWLGI (175 aa). GTP contacts are provided by residues 37-44, 64-68, 82-85, 149-152, and 182-184; these read GRSNAGKS, GRTQL, DLPG, TKAD, and FSA. Mg(2+)-binding residues include Ser44 and Thr66.

This sequence belongs to the TRAFAC class TrmE-Era-EngA-EngB-Septin-like GTPase superfamily. EngB GTPase family. Mg(2+) serves as cofactor.

In terms of biological role, necessary for normal cell division and for the maintenance of normal septation. This Alcanivorax borkumensis (strain ATCC 700651 / DSM 11573 / NCIMB 13689 / SK2) protein is Probable GTP-binding protein EngB.